The chain runs to 11197 residues: Nonribosomal peptide synthetase 5 (11197 aa).

Residues 19–413 (AQRARKQPDA…DGTLQVVGHK (395 aa)) form an adenylation (A) domain 1 region. The segment at 426–452 (HASSSASSVGETPGVTGPISTPMGDSV) is disordered. Residues 690–897 (KQLRQFCQEQ…LMDESMKQQI (208 aa)) are condensation (C) domain 1. The tract at residues 918–1310 (DAAQDYPDAP…GRHDGQLKVR (393 aa)) is adenylation (A) domain 2. A Carrier 1 domain is found at 1446–1522 (ADRSPVHMML…DMANNIAISE (77 aa)). Residue Ser1483 is modified to O-(pantetheine 4'-phosphoryl)serine. The segment at 1952–2380 (VEDVYPCSPV…SDISLMDPLS (429 aa)) is condensation (C) domain 2. Residues 2406–2805 (VARIEPDKMA…QRKDTQIKIR (400 aa)) form an adenylation (A) domain 3 region. One can recognise a Carrier 2 domain in the interval 2945–3021 (DSLTSTEVTI…SLAAFVDYDS (77 aa)). Residue Ser2982 is modified to O-(pantetheine 4'-phosphoryl)serine. Residues 3041–3481 (EESFALSPIQ…TSTMKSEFTL (441 aa)) form an epimerase (E) domain 1 region. Residues 3515–3957 (EEIFPCSPMQ…VSPETRCELD (443 aa)) form a condensation (C) domain 3 region. The adenylation (A) domain 4 stretch occupies residues 3976-4371 (FEQQVEKIPD…RRRDNQVKVR (396 aa)). Positions 4508–4584 (RKLTPMEQQL…ELANHARFKA (77 aa)) constitute a Carrier 3 domain. Ser4545 is subject to O-(pantetheine 4'-phosphoryl)serine. Residues 4603–5022 (FPLLPIQRMF…LNEYTAALRS (420 aa)) are epimerase (E) domain 2. A condensation (C) domain 4 region spans residues 5069-5501 (ESIYPCSPLQ…LVGDSERQGL (433 aa)). The segment at 5521–5918 (EAQVKAIPDN…RRKDTQVKVR (398 aa)) is adenylation (A) domain 5. One can recognise a Carrier 4 domain in the interval 6068-6141 (SEAEDIIRAV…ALAQFVSQST (74 aa)). Ser6102 is subject to O-(pantetheine 4'-phosphoryl)serine. The interval 6162–6512 (FSLSPIQQMF…MEILFNYFGQ (351 aa)) is epimerase (E) domain 3. The condensation (C) domain 5 stretch occupies residues 6636–7076 (EEIFPCSPIQ…LVGAETRREM (441 aa)). The tract at residues 7097 to 7491 (ERNSQAMPDR…RRRDNQVKVR (395 aa)) is adenylation (A) domain 6. One can recognise a Carrier 5 domain in the interval 7636-7712 (KPKTKMEEHF…DLAGRSRFKN (77 aa)). The residue at position 7673 (Ser7673) is an O-(pantetheine 4'-phosphoryl)serine. The tract at residues 7733 to 8162 (ALLPIQRLFF…KYMLETLASQ (430 aa)) is epimerase (E) domain 4. The interval 8205–8638 (EASYPCSPLQ…MLGDSGRKRI (434 aa)) is condensation (C) domain 6. Residues 8660 to 8832 (EAHVKESPNR…DHRATATEIV (173 aa)) are adenylation (A) domain 7. Residues 9173–9248 (SAQTAVVQII…AMAAKAQQIG (76 aa)) enclose the Carrier 6 domain. Ser9209 is modified (O-(pantetheine 4'-phosphoryl)serine). Positions 9565 to 9683 (RVKDMRRAIP…LHEVVSALQK (119 aa)) are epimerase (E) domain 5. The tract at residues 9721 to 10116 (VEDVYPTSPM…LVPAKHMEQL (396 aa)) is condensation (C) domain 7. An adenylation (A) domain 8 region spans residues 10136-10529 (DDMVRSTPTA…VGRKDTQIKI (394 aa)). Residues 10663-10749 (LDSSDYVAMQ…TLAVTIKADM (87 aa)) enclose the Carrier 7 domain. Residue Ser10708 is modified to O-(pantetheine 4'-phosphoryl)serine. The thioesterase (TE) domain stretch occupies residues 10806 to 11104 (NFLVTGSTGF…SLRPMSGPEW (299 aa)).

It belongs to the NRP synthetase family.

It participates in secondary metabolite biosynthesis. Functionally, nonribosomal peptide synthetase; part of the Fg3_54/C64 gene cluster that mediates the biosynthesis of the octapeptide fusaoctaxin A, a virulence factor that is required for cell-to-cell invasiveness of plant host. The 2 nonribosomal peptide synthetases NRPS9 and NRPS5 form an assembly line which likely utilizes GABA as a starter unit (loaded on the unique module M1 of NRPS9) and sequentially incorporates seven extender units composed of the residues L-Ala, L-allo-Ile, L-Ser, L-Val, L-Ser, L-Leu and L-Leu, respectively. During the process, each of the residues that are tethered on modules M3-M7 of NRPS5 containing an E domain can undergo an epimerization reaction to produce a D-configuration before the transpeptidation reaction occurs. The elongation of the peptidyl chain might be terminated by module M8-mediated L-Leu incorporation, followed by R domain-catalyzed 4 electron reduction to release the resulting octapeptide from the assembly line as an alcohol. Fusaoctaxin A is cleaved by the cluster specific ABC transporter FGM5 to the pentapeptide fusapentaxin A and the tripeptide fusatrixin A. The other enzymes from the cluster, FGM1, FGM2, FGM3 and FGM9 seem not to be involved in the biosynthesis of fusaoctaxin A and their functions have still to be determined. The protein is Nonribosomal peptide synthetase 5 of Gibberella zeae (strain ATCC MYA-4620 / CBS 123657 / FGSC 9075 / NRRL 31084 / PH-1) (Wheat head blight fungus).